A 453-amino-acid polypeptide reads, in one-letter code: MTTDTIVAQATAPGRGGVGIIRISGDLATNVATAIIGHVPKTRYAEYCDFNNADGQVIDQGIALFFKGPNSFTGEDVLELQGHGGQIVLDMLIKRVMEIDGIRIARPGEFSEQAFMNDKLDLTQAEAIADLIDATSEQAAKSALQSLQGEFSKEVHELVDQVTNLRLYVEAAIDFPDEEVDFLSDGKIANALYKIISKLDTVQASAKQGSIIREGMKVVIAGRPNAGKSSLLNALAGKESAIVTEIAGTTRDVLREHIHLDGMPLHIIDTAGLRDTLDTVEQIGIERAWAEIASADRVLFMVDGTTTDAVNPHEIWPDFIDRLPAKLGVTVVRNKADLTGETLDKTEEQGSCVYRISAKTGLGIDELKQHLKSLMGYQSNLEGGFIARRRHLEALELAANHLQLGKEQLEVYLAGELLAEELRMTQMALSEITGKFTSDDLLGKIFGSFCIGK.

(6S)-5-formyl-5,6,7,8-tetrahydrofolate-binding residues include arginine 22, glutamate 79, and lysine 119. One can recognise a TrmE-type G domain in the interval 215–376 (GMKVVIAGRP…LKQHLKSLMG (162 aa)). Residue asparagine 225 participates in K(+) binding. GTP contacts are provided by residues 225–230 (NAGKSS), 244–250 (TEIAGTT), 269–272 (DTAG), and 334–337 (NKAD). Mg(2+) is bound at residue serine 229. The K(+) site is built by threonine 244, isoleucine 246, and threonine 249. Threonine 250 serves as a coordination point for Mg(2+). Position 453 (lysine 453) interacts with (6S)-5-formyl-5,6,7,8-tetrahydrofolate.

It belongs to the TRAFAC class TrmE-Era-EngA-EngB-Septin-like GTPase superfamily. TrmE GTPase family. In terms of assembly, homodimer. Heterotetramer of two MnmE and two MnmG subunits. Requires K(+) as cofactor.

It localises to the cytoplasm. Exhibits a very high intrinsic GTPase hydrolysis rate. Involved in the addition of a carboxymethylaminomethyl (cmnm) group at the wobble position (U34) of certain tRNAs, forming tRNA-cmnm(5)s(2)U34. The protein is tRNA modification GTPase MnmE of Shewanella frigidimarina (strain NCIMB 400).